Consider the following 838-residue polypeptide: Major vault protein (838 aa).

MVP repeat units follow at residues 13 to 52, 53 to 114, 118 to 170, 171 to 223, 224 to 278, 280 to 328, 329 to 380, and 381 to 433; these read VHIL…VVPP, RFYC…FKLK, VNTG…HIIS, PNTA…ITLT, DTEA…IVLN, KEYC…NVVS, KDQA…IALD, and KNEG…CMSE.

The vault ribonucleoprotein particle is a huge (400 A x 670 A) cage structure of 12.9 MDa. It consists of a dimer of half-vaults, with each half-vault comprising 39 identical major vault protein (MVP) chains, PARP4 and one or more vault RNAs (vRNAs).

The protein resides in the cytoplasm. The protein localises to the nucleus. Required for normal vault structure. Vaults are multi-subunit structures that may act as scaffolds for proteins involved in signal transduction. Vaults may also play a role in nucleo-cytoplasmic transport. The polypeptide is Major vault protein (Trypanosoma cruzi (strain CL Brener)).